Reading from the N-terminus, the 429-residue chain is UDP-glucuronate 4-epimerase 1 (429 aa).

The next 2 membrane-spanning stretches (helical) occupy residues 36–56 and 87–107; these read FLWALFLIALTASYLSFQSFV and GISVLVTGATGFVGSHVSLAL. 89–120 contacts NAD(+); the sequence is SVLVTGATGFVGSHVSLALRKRGDGVVGLDNF. Tyr-239 acts as the Proton acceptor in catalysis.

The protein belongs to the NAD(P)-dependent epimerase/dehydratase family. Homodimer. As to expression, in root stele, leaves, siliques, flowers, pollen and stems.

It localises to the golgi apparatus. Its subcellular location is the golgi stack membrane. It carries out the reaction UDP-alpha-D-glucuronate = UDP-alpha-D-galacturonate. Its activity is regulated as follows. Inhibited by UDP-Xylose. UDP-D-glucuronate 4-epimerase involved in the synthesis of the negatively charged monosaccharide that forms the backbone of pectic cell wall components. In Arabidopsis thaliana (Mouse-ear cress), this protein is UDP-glucuronate 4-epimerase 1 (GAE1).